We begin with the raw amino-acid sequence, 121 residues long: Large ribosomal subunit protein uL18 (121 aa).

The protein belongs to the universal ribosomal protein uL18 family. Part of the 50S ribosomal subunit; part of the 5S rRNA/L5/L18/L25 subcomplex. Contacts the 5S and 23S rRNAs.

Its function is as follows. This is one of the proteins that bind and probably mediate the attachment of the 5S RNA into the large ribosomal subunit, where it forms part of the central protuberance. This Caldanaerobacter subterraneus subsp. tengcongensis (strain DSM 15242 / JCM 11007 / NBRC 100824 / MB4) (Thermoanaerobacter tengcongensis) protein is Large ribosomal subunit protein uL18.